Consider the following 301-residue polypeptide: UstYa family oxidase phomYd (301 aa).

The segment at 1–26 (MEKFFSPSRHNYADLSPTDVPASEES) is disordered. Residues 47-69 (VLVNRLLAASTVALVMVSLWLGW) form a helical membrane-spanning segment. 2 short sequence motifs (HXXHC) span residues 189-194 (THSVHC) and 218-222 (HTDHC). N-linked (GlcNAc...) asparagine glycosylation occurs at N275.

Belongs to the ustYa family.

The protein resides in the membrane. It functions in the pathway mycotoxin biosynthesis. UstYa family oxidase; part of the gene cluster that mediates the biosynthesis of the phomopsins, a group of hexapeptide mycotoxins which infects lupins and causes lupinosis disease in livestock. Within the pathway, phomYd catalyzes the desaturation of the Asp moiety into 2,3-dehydroaspartic acid (dAsp). The pathway starts with the processing of the precursor phomA by several endopeptidases including kexin proteases as well as the cluster-specific S41 family peptidase phomP1 and the oligopeptidase phomG to produce 10 identical copies of the hexapeptide Tyr-Val-Ile-Pro-Ile-Asp. After being excised from the precursor peptide, the core peptides are cyclized and modified post-translationally by enzymes encoded within the gene cluster. The timing and order of proteolysis of the phomA precursor and PTMs are still unknown. Two tyrosinase-like enzymes, phomQ1 and phomQ2, catalyze the chlorination and hydroxylation of Tyr, respectively. PhomYb, is proposed to be involved in the construction of the macrocyclic structure. The other 4 ustYa family proteins may be involved in PTMs that generate the unique structure of phomopsin A. PhomYa is required for the hydroxylation of C-beta of Tyr. PhomYc, phomYd, and phomYe are responsible for the biosynthesis of 2,3-dehydroisoleucine (dIle), 2,3-dehydroaspartic acid (dAsp), and 3,4-dehydroproline (dPro), respectively. While dIle formation by phomYc is indispensable for the installation of dAsp by phomYd, the order of the other PTMs have not been elucidated yet. Most of the biosynthetic enzymes likely have broad substrate specificity, and thus, there might be a metabolic grid from a precursor to phomopsin A. The enzyme(s) responsible for the biosynthesis of 3,4-dehydrovaline (dVal) have also not been identified yet. Finally, phomM acts as an S-adenosylmethionine-dependent alpha-N-methyltransferase that catalyzes two successive N-methylation reactions, converting N-desmethyl-phomopsin A to phomopsin A and phomopsin A further to an N,N-dimethylated congener called phomopsin E. The protein is UstYa family oxidase phomYd of Diaporthe leptostromiformis (Lupinosis disease fungus).